The primary structure comprises 273 residues: Flagellin FljO (273 aa).

The protein belongs to the bacterial flagellin family. In terms of assembly, in C.crescentus, the flagellar filament is composed of multiple flagellins of 29 kDa; 27 kDa and 25 kDa.

Its subcellular location is the secreted. It is found in the bacterial flagellum. Flagellin is the subunit protein which polymerizes to form the filaments of bacterial flagella. The protein is Flagellin FljO (fljO) of Caulobacter vibrioides (strain ATCC 19089 / CIP 103742 / CB 15) (Caulobacter crescentus).